The primary structure comprises 223 residues: Endonuclease NucS (223 aa).

Belongs to the NucS endonuclease family.

It is found in the cytoplasm. In terms of biological role, cleaves both 3' and 5' ssDNA extremities of branched DNA structures. The polypeptide is Endonuclease NucS (Mycolicibacterium vanbaalenii (strain DSM 7251 / JCM 13017 / BCRC 16820 / KCTC 9966 / NRRL B-24157 / PYR-1) (Mycobacterium vanbaalenii)).